The chain runs to 367 residues: tRNA/tmRNA (uracil-C(5))-methyltransferase (367 aa).

Residues Q191, Y218, N223, E239, and D299 each contribute to the S-adenosyl-L-methionine site. Residue C324 is the Nucleophile of the active site. Catalysis depends on E358, which acts as the Proton acceptor.

This sequence belongs to the class I-like SAM-binding methyltransferase superfamily. RNA M5U methyltransferase family. TrmA subfamily.

The enzyme catalyses uridine(54) in tRNA + S-adenosyl-L-methionine = 5-methyluridine(54) in tRNA + S-adenosyl-L-homocysteine + H(+). It catalyses the reaction uridine(341) in tmRNA + S-adenosyl-L-methionine = 5-methyluridine(341) in tmRNA + S-adenosyl-L-homocysteine + H(+). Functionally, dual-specificity methyltransferase that catalyzes the formation of 5-methyluridine at position 54 (m5U54) in all tRNAs, and that of position 341 (m5U341) in tmRNA (transfer-mRNA). The protein is tRNA/tmRNA (uracil-C(5))-methyltransferase of Campylobacter concisus (strain 13826).